The sequence spans 401 residues: MTQDVSPIITSLLDTDAYKLHMQQAVYHRYRNVSVAAEFRCRGDELLGEYAGEIANQVNLMGQLALTQDEYDYLAALPFFQRDYLDWLRTLRLDPRRVAISNDRGRLNIRISGPWREVILWEVPLLAVISEVVHRHRSPHITPEVAAAQLQRRLSEFRHLSADVDLRGFHLIDFGTRRRFSRAVHQAILTTLKSEFPYLSGTSNYLFAKQMALTPLGTQAHEWFQAHQQICPVLANSQRAALQSWLDEYPDQLGIALTDCITMDAFLRDFGSQFAGHYQGLRHDSGDPIAWGEKAIAHYEQLGLDPQDKMLVFSDNLDLPKALALYRHFHHRINLSFGIGTRLTCDLPGVRPLNIVIKLVECNGKPVAKLSDSPGKTICQDAAFVKALRKAFDLPLVKRAS.

A Phosphohistidine; by autocatalysis modification is found at His221.

The protein belongs to the NAPRTase family. In terms of processing, transiently phosphorylated on a His residue during the reaction cycle. Phosphorylation strongly increases the affinity for substrates and increases the rate of nicotinate D-ribonucleotide production. Dephosphorylation regenerates the low-affinity form of the enzyme, leading to product release.

It catalyses the reaction nicotinate + 5-phospho-alpha-D-ribose 1-diphosphate + ATP + H2O = nicotinate beta-D-ribonucleotide + ADP + phosphate + diphosphate. The protein operates within cofactor biosynthesis; NAD(+) biosynthesis; nicotinate D-ribonucleotide from nicotinate: step 1/1. In terms of biological role, catalyzes the synthesis of beta-nicotinate D-ribonucleotide from nicotinate and 5-phospho-D-ribose 1-phosphate at the expense of ATP. The protein is Nicotinate phosphoribosyltransferase of Edwardsiella ictaluri (strain 93-146).